The sequence spans 110 residues: Insulin (110 aa).

An N-terminal signal peptide occupies residues 1-24 (MALWMHLLTVLALLALWGPNTGQA). 3 disulfides stabilise this stretch: Cys31–Cys96, Cys43–Cys109, and Cys95–Cys100. A propeptide spans 57-87 (ELEDPQVEQTELGMGLGAGGLQPLALEMALQ) (c peptide).

Belongs to the insulin family. In terms of assembly, heterodimer of a B chain and an A chain linked by two disulfide bonds.

The protein resides in the secreted. Its function is as follows. Insulin decreases blood glucose concentration. It increases cell permeability to monosaccharides, amino acids and fatty acids. It accelerates glycolysis, the pentose phosphate cycle, and glycogen synthesis in liver. This Cavia porcellus (Guinea pig) protein is Insulin (INS).